Reading from the N-terminus, the 921-residue chain is Isoleucine--tRNA ligase (921 aa).

A 'HIGH' region motif is present at residues 57-67 (PYANGDIHMGH). Glu-552 lines the L-isoleucyl-5'-AMP pocket. Residues 593–597 (KMSKS) carry the 'KMSKS' region motif. Lys-596 provides a ligand contact to ATP. The Zn(2+) site is built by Cys-887, Cys-890, Cys-907, and Cys-910.

This sequence belongs to the class-I aminoacyl-tRNA synthetase family. IleS type 1 subfamily. In terms of assembly, monomer. Requires Zn(2+) as cofactor.

Its subcellular location is the cytoplasm. The catalysed reaction is tRNA(Ile) + L-isoleucine + ATP = L-isoleucyl-tRNA(Ile) + AMP + diphosphate. Its function is as follows. Catalyzes the attachment of isoleucine to tRNA(Ile). As IleRS can inadvertently accommodate and process structurally similar amino acids such as valine, to avoid such errors it has two additional distinct tRNA(Ile)-dependent editing activities. One activity is designated as 'pretransfer' editing and involves the hydrolysis of activated Val-AMP. The other activity is designated 'posttransfer' editing and involves deacylation of mischarged Val-tRNA(Ile). This Halalkalibacterium halodurans (strain ATCC BAA-125 / DSM 18197 / FERM 7344 / JCM 9153 / C-125) (Bacillus halodurans) protein is Isoleucine--tRNA ligase.